We begin with the raw amino-acid sequence, 178 residues long: MYHRLILLALVGTTMANVIPFSMSNIPEEYKEFIPEEVRNFYKDLTVEDKEILRELASKHATFANEDAALEALKDKSDKLYKNAVELRNFVKAKIDSLKPDAKIFVDEIIAKARSLRSDDGHKLDTEKIKQAARDIIAKYQALSEETKEELKVTFPAIAKIIGNEKLKRNASTFLQKN.

The first 16 residues, 1–16, serve as a signal peptide directing secretion; it reads MYHRLILLALVGTTMA. 2 coiled-coil regions span residues 67–89 and 130–153; these read DAAL…ELRN and KQAA…ELKV.

This sequence belongs to the fatty-acid and retinol-binding protein (FARBP) family. Not glycosylated.

It is found in the secreted. In terms of biological role, binds retinol. Also binds the fluorescent fatty acid 11-((5-dimethylaminonaphthalene-1-sulfonyl)amino)undecanoic acid (DAUDA). The long chain fatty acid oleic acid can act competitively to displace bound DAUDA and retinol. This Brugia malayi (Filarial nematode worm) protein is Fatty-acid and retinol-binding protein 1.